Reading from the N-terminus, the 435-residue chain is Hydrogenobyrinate a,c-diamide synthase (435 aa).

The GATase cobBQ-type domain maps to 239 to 422; sequence RIGVARDASF…IHFYLPSNPQ (184 aa). The active-site Nucleophile is the C321.

Belongs to the CobB/CbiA family. Mg(2+) serves as cofactor.

It catalyses the reaction hydrogenobyrinate + 2 L-glutamine + 2 ATP + 2 H2O = hydrogenobyrinate a,c-diamide + 2 L-glutamate + 2 ADP + 2 phosphate + 2 H(+). The protein operates within cofactor biosynthesis; adenosylcobalamin biosynthesis; cob(II)yrinate a,c-diamide from precorrin-2 (aerobic route): step 9/10. Functionally, catalyzes the ATP-dependent amidation of the two carboxylate groups at positions a and c of hydrogenobyrinate, using either L-glutamine or ammonia as the nitrogen source. The sequence is that of Hydrogenobyrinate a,c-diamide synthase from Pseudomonas aeruginosa (strain ATCC 15692 / DSM 22644 / CIP 104116 / JCM 14847 / LMG 12228 / 1C / PRS 101 / PAO1).